The sequence spans 167 residues: Small ribosomal subunit protein uS5 (167 aa).

The S5 DRBM domain occupies 12 to 75 (LEDNVVAINR…EAARKNLIEV (64 aa)).

Belongs to the universal ribosomal protein uS5 family. As to quaternary structure, part of the 30S ribosomal subunit. Contacts proteins S4 and S8.

Its function is as follows. With S4 and S12 plays an important role in translational accuracy. In terms of biological role, located at the back of the 30S subunit body where it stabilizes the conformation of the head with respect to the body. The protein is Small ribosomal subunit protein uS5 of Levilactobacillus brevis (strain ATCC 367 / BCRC 12310 / CIP 105137 / JCM 1170 / LMG 11437 / NCIMB 947 / NCTC 947) (Lactobacillus brevis).